Consider the following 68-residue polypeptide: Large ribosomal subunit protein uL29 (68 aa).

Belongs to the universal ribosomal protein uL29 family.

This Streptococcus gordonii (strain Challis / ATCC 35105 / BCRC 15272 / CH1 / DL1 / V288) protein is Large ribosomal subunit protein uL29.